A 140-amino-acid polypeptide reads, in one-letter code: 3-hydroxyacyl-[acyl-carrier-protein] dehydratase FabZ (140 aa).

H47 is a catalytic residue.

The protein belongs to the thioester dehydratase family. FabZ subfamily.

The protein localises to the cytoplasm. The catalysed reaction is a (3R)-hydroxyacyl-[ACP] = a (2E)-enoyl-[ACP] + H2O. In terms of biological role, involved in unsaturated fatty acids biosynthesis. Catalyzes the dehydration of short chain beta-hydroxyacyl-ACPs and long chain saturated and unsaturated beta-hydroxyacyl-ACPs. This is 3-hydroxyacyl-[acyl-carrier-protein] dehydratase FabZ from Streptococcus pneumoniae (strain CGSP14).